The sequence spans 220 residues: Chloramphenicol acetyltransferase (220 aa).

Histidine 187 acts as the Proton acceptor in catalysis.

Belongs to the chloramphenicol acetyltransferase family. Homotrimer.

The catalysed reaction is chloramphenicol + acetyl-CoA = chloramphenicol 3-acetate + CoA. Functionally, this enzyme is an effector of chloramphenicol resistance in bacteria. This chain is Chloramphenicol acetyltransferase (cat86), found in Bacillus pumilus (Bacillus mesentericus).